The primary structure comprises 787 residues: Pyridoxal-dependent decarboxylase domain-containing protein 1 (787 aa).

Positions 26 to 44 (MLEKSPRRTEEENGKKPVS) are enriched in basic and acidic residues. Residues 26–52 (MLEKSPRRTEEENGKKPVSEDIPGPLQ) are disordered. Residue serine 652 is modified to Phosphoserine. The tract at residues 682–787 (QGTGVTPPPT…SQVEELERLR (106 aa)) is disordered. 2 positions are modified to phosphothreonine: threonine 687 and threonine 691. Serine 710, serine 718, serine 722, and serine 748 each carry phosphoserine. Over residues 725 to 748 (HIEDLEKVEQLSSGLEHDNLEAHS) the composition is skewed to basic and acidic residues. Residues 759-771 (TARQTEALQNQAQ) are compositionally biased toward polar residues. Residues 772–787 (HQEDDHSQVEELERLR) are compositionally biased toward basic and acidic residues. A Phosphoserine modification is found at serine 778.

Belongs to the group II decarboxylase family. Requires pyridoxal 5'-phosphate as cofactor.

The polypeptide is Pyridoxal-dependent decarboxylase domain-containing protein 1 (Pdxdc1) (Mus musculus (Mouse)).